The chain runs to 414 residues: tRNA dimethylallyltransferase (414 aa).

ATP is bound at residue 33 to 40; the sequence is APTASGKT. Position 35–40 (35–40) interacts with substrate; it reads TASGKT. 3 interaction with substrate tRNA regions span residues 58 to 61, 182 to 186, and 266 to 271; these read DSAL, QRITR, and RCVGYR.

It belongs to the IPP transferase family. Monomer. Mg(2+) serves as cofactor.

The catalysed reaction is adenosine(37) in tRNA + dimethylallyl diphosphate = N(6)-dimethylallyladenosine(37) in tRNA + diphosphate. In terms of biological role, catalyzes the transfer of a dimethylallyl group onto the adenine at position 37 in tRNAs that read codons beginning with uridine, leading to the formation of N6-(dimethylallyl)adenosine (i(6)A). The chain is tRNA dimethylallyltransferase from Psychrobacter cryohalolentis (strain ATCC BAA-1226 / DSM 17306 / VKM B-2378 / K5).